The chain runs to 157 residues: Small ribosomal subunit protein uS7 (157 aa).

It belongs to the universal ribosomal protein uS7 family. In terms of assembly, part of the 30S ribosomal subunit. Contacts proteins S9 and S11.

One of the primary rRNA binding proteins, it binds directly to 16S rRNA where it nucleates assembly of the head domain of the 30S subunit. Is located at the subunit interface close to the decoding center, probably blocks exit of the E-site tRNA. This is Small ribosomal subunit protein uS7 from Protochlamydia amoebophila (strain UWE25).